Here is a 473-residue protein sequence, read N- to C-terminus: Glutamate--tRNA ligase (473 aa).

The 'HIGH' region signature appears at proline 9–glycine 19. Zn(2+) contacts are provided by cysteine 98, cysteine 100, cysteine 125, and aspartate 127. The 'KMSKS' region signature appears at lysine 237–arginine 241. An ATP-binding site is contributed by lysine 240.

This sequence belongs to the class-I aminoacyl-tRNA synthetase family. Glutamate--tRNA ligase type 1 subfamily. Monomer. Zn(2+) is required as a cofactor.

The protein resides in the cytoplasm. The catalysed reaction is tRNA(Glu) + L-glutamate + ATP = L-glutamyl-tRNA(Glu) + AMP + diphosphate. Its function is as follows. Catalyzes the attachment of glutamate to tRNA(Glu) in a two-step reaction: glutamate is first activated by ATP to form Glu-AMP and then transferred to the acceptor end of tRNA(Glu). The chain is Glutamate--tRNA ligase from Sodalis glossinidius (strain morsitans).